We begin with the raw amino-acid sequence, 350 residues long: Ketol-acid reductoisomerase (NADP(+)) 2 (350 aa).

In terms of domain architecture, KARI N-terminal Rossmann spans 3–183; that stretch reads ATIWYEKDAD…GALRAGAIKT (181 aa). Residues 26–29, Arg-49, Ser-52, Ser-54, and 84–87 contribute to the NADP(+) site; these read YGSQ and DQYQ. The active site involves His-109. NADP(+) is bound at residue Gly-135. A KARI C-terminal knotted domain is found at 184 to 327; that stretch reads TFTEETETDL…PKLRAMFSWN (144 aa). Residues Asp-192, Glu-196, Glu-228, and Glu-232 each coordinate Mg(2+). Ser-253 serves as a coordination point for substrate. Positions 331–350 are disordered; the sequence is AKDKDETESFNGKIARTQVQ.

This sequence belongs to the ketol-acid reductoisomerase family. Mg(2+) serves as cofactor.

It carries out the reaction (2R)-2,3-dihydroxy-3-methylbutanoate + NADP(+) = (2S)-2-acetolactate + NADPH + H(+). The catalysed reaction is (2R,3R)-2,3-dihydroxy-3-methylpentanoate + NADP(+) = (S)-2-ethyl-2-hydroxy-3-oxobutanoate + NADPH + H(+). It participates in amino-acid biosynthesis; L-isoleucine biosynthesis; L-isoleucine from 2-oxobutanoate: step 2/4. The protein operates within amino-acid biosynthesis; L-valine biosynthesis; L-valine from pyruvate: step 2/4. In terms of biological role, involved in the biosynthesis of branched-chain amino acids (BCAA). Catalyzes an alkyl-migration followed by a ketol-acid reduction of (S)-2-acetolactate (S2AL) to yield (R)-2,3-dihydroxy-isovalerate. In the isomerase reaction, S2AL is rearranged via a Mg-dependent methyl migration to produce 3-hydroxy-3-methyl-2-ketobutyrate (HMKB). In the reductase reaction, this 2-ketoacid undergoes a metal-dependent reduction by NADPH to yield (R)-2,3-dihydroxy-isovalerate. This Bifidobacterium longum (strain NCC 2705) protein is Ketol-acid reductoisomerase (NADP(+)) 2.